Here is a 676-residue protein sequence, read N- to C-terminus: E3 ubiquitin-protein ligase ICP0 (676 aa).

The segment at 13-52 adopts an RING-type zinc-finger fold; it reads CCICLDAITGAARALPCLHAFCLACIRRWLEGRPTCPLCK. Disordered regions lie at residues 101–135, 266–486, and 555–676; these read DLTA…EAAG, HLIP…PAPI, and AAIS…AWRQ. Residues 110-135 are compositionally biased toward gly residues; the sequence is PGAGGEAGAAGGSEAGGGAGGAEAAG. Acidic residues predominate over residues 286–303; that stretch reads SDSDSEGSEDDSWSESEE. Positions 304–314 are enriched in low complexity; that stretch reads SSSGLSTSDLT. The segment covering 315 to 328 has biased composition (acidic residues); it reads AIDDTETEPETDAE. Residues 351-361 show a composition bias toward polar residues; it reads YVSTRGRQTPA. Composition is skewed to low complexity over residues 375–388 and 397–411; these read GRAA…SSRS and LPAA…QARA. The segment covering 422 to 439 has biased composition (gly residues); the sequence is GAGLGVAAGETAGWGVGS. Residues 440 to 450 show a composition bias toward basic and acidic residues; sequence EEGRGERRAKL. Pro residues predominate over residues 474–484; sequence TPAPAPAPAPA. Residues 555-597 show a composition bias toward low complexity; sequence AAISTRAPTPSPAGRAPAADPRRAGAPALAGAARAEAGRNGNP.

Auto-ubiquitinated. In terms of processing, the strongly acidic region might serve as a transcriptional activation domain, possibly regulated through phosphorylation by casein kinase II.

The catalysed reaction is S-ubiquitinyl-[E2 ubiquitin-conjugating enzyme]-L-cysteine + [acceptor protein]-L-lysine = [E2 ubiquitin-conjugating enzyme]-L-cysteine + N(6)-ubiquitinyl-[acceptor protein]-L-lysine.. Functionally, evades nuclear antiviral defenses triggered by dsDNA viruses. Acts during the initial stages of lytic infection and the reactivation of latent viral genome. Prevents the antiviral effect of nuclear bodies by degrading host PML and SP100. The protein is E3 ubiquitin-protein ligase ICP0 (BICP0) of Bos taurus (Bovine).